The sequence spans 81 residues: Acyl carrier protein (81 aa).

Positions 2–80 (ASNEEILAGL…DAVSYIASAQ (79 aa)) constitute a Carrier domain. Ser40 carries the post-translational modification O-(pantetheine 4'-phosphoryl)serine.

The protein belongs to the acyl carrier protein (ACP) family. 4'-phosphopantetheine is transferred from CoA to a specific serine of apo-ACP by AcpS. This modification is essential for activity because fatty acids are bound in thioester linkage to the sulfhydryl of the prosthetic group.

The protein localises to the cytoplasm. It participates in lipid metabolism; fatty acid biosynthesis. Carrier of the growing fatty acid chain in fatty acid biosynthesis. This chain is Acyl carrier protein, found in Renibacterium salmoninarum (strain ATCC 33209 / DSM 20767 / JCM 11484 / NBRC 15589 / NCIMB 2235).